A 1253-amino-acid chain; its full sequence is Methionine synthase (1253 aa).

Residues 6–326 form the Hcy-binding domain; it reads QDEIEAILRK…DHIREIAEAV (321 aa). Residues Cys-248, Cys-311, and Cys-312 each contribute to the Zn(2+) site. A Pterin-binding domain is found at 359–620; sequence FVNIGERCNV…IHKDLLQLCE (262 aa). (6S)-5,6,7,8-tetrahydrofolate-binding positions include 370–372, Asp-437, Asn-458, Asp-525, Asn-567, Arg-573, and Arg-579; that span reads GSK. Residues 650-747 enclose the B12-binding N-terminal domain; it reads QTDEWRNGSI…FMEKEREEAR (98 aa). Methylcob(III)alamin contacts are provided by residues Glu-697, 770–774, His-773, Ser-818, Thr-822, and Ala-874; that span reads GDVHD. A B12-binding domain is found at 760 to 895; that stretch reads QGTIVLATVK…DENLKDDYFE (136 aa). The AdoMet activation domain occupies 911 to 1253; sequence SLKERKYLPL…LGPILGYDTD (343 aa). S-adenosyl-L-methionine-binding positions include Asp-962, Arg-1160, and 1215–1216; that span reads YF. Thr-1252 is subject to Phosphothreonine.

Belongs to the vitamin-B12 dependent methionine synthase family. Monomer. Dimer. Forms a multiprotein complex with MMACHC, MMADHC and MTRR. Requires methylcob(III)alamin as cofactor. It depends on Zn(2+) as a cofactor.

The protein localises to the cytoplasm. The enzyme catalyses (6S)-5-methyl-5,6,7,8-tetrahydrofolate + L-homocysteine = (6S)-5,6,7,8-tetrahydrofolate + L-methionine. It functions in the pathway amino-acid biosynthesis; L-methionine biosynthesis via de novo pathway; L-methionine from L-homocysteine (MetH route): step 1/1. In terms of biological role, catalyzes the transfer of a methyl group from methylcob(III)alamin (MeCbl) to homocysteine, yielding enzyme-bound cob(I)alamin and methionine in the cytosol. MeCbl is an active form of cobalamin (vitamin B12) used as a cofactor for methionine biosynthesis. Cob(I)alamin form is regenerated to MeCbl by a transfer of a methyl group from 5-methyltetrahydrofolate. The processing of cobalamin in the cytosol occurs in a multiprotein complex composed of at least MMACHC, MMADHC, MTRR (methionine synthase reductase) and MTR which may contribute to shuttle safely and efficiently cobalamin towards MTR in order to produce methionine. The polypeptide is Methionine synthase (Mtr) (Rattus norvegicus (Rat)).